The sequence spans 597 residues: Elongation factor 4 (597 aa).

A tr-type G domain is found at 2 to 184 (KHIRNFSIIA…TIVKSIPAPE (183 aa)). GTP contacts are provided by residues 14-19 (DHGKST) and 131-134 (NKID).

Belongs to the TRAFAC class translation factor GTPase superfamily. Classic translation factor GTPase family. LepA subfamily.

The protein resides in the cell inner membrane. It catalyses the reaction GTP + H2O = GDP + phosphate + H(+). Its function is as follows. Required for accurate and efficient protein synthesis under certain stress conditions. May act as a fidelity factor of the translation reaction, by catalyzing a one-codon backward translocation of tRNAs on improperly translocated ribosomes. Back-translocation proceeds from a post-translocation (POST) complex to a pre-translocation (PRE) complex, thus giving elongation factor G a second chance to translocate the tRNAs correctly. Binds to ribosomes in a GTP-dependent manner. The sequence is that of Elongation factor 4 from Aliivibrio fischeri (strain MJ11) (Vibrio fischeri).